Here is a 485-residue protein sequence, read N- to C-terminus: 3-isopropylmalate dehydratase large subunit (485 aa).

The [4Fe-4S] cluster site is built by Cys367, Cys427, and Cys430. The span at 439–451 (SPGQRAASTSNRN) shows a compositional bias: polar residues. The tract at residues 439–462 (SPGQRAASTSNRNFEGRQGKGGRT) is disordered.

Belongs to the aconitase/IPM isomerase family. LeuC type 1 subfamily. In terms of assembly, heterodimer of LeuC and LeuD. [4Fe-4S] cluster is required as a cofactor.

It carries out the reaction (2R,3S)-3-isopropylmalate = (2S)-2-isopropylmalate. Its pathway is amino-acid biosynthesis; L-leucine biosynthesis; L-leucine from 3-methyl-2-oxobutanoate: step 2/4. Functionally, catalyzes the isomerization between 2-isopropylmalate and 3-isopropylmalate, via the formation of 2-isopropylmaleate. In Actinoplanes teichomyceticus, this protein is 3-isopropylmalate dehydratase large subunit.